Consider the following 547-residue polypeptide: Probable high-affinity hexose transporter ght8, mitochondrial (547 aa).

A mitochondrion-targeting transit peptide spans 1–21 (MGKTLTIVMLVFVSMAGWMFG). The Mitochondrial intermembrane portion of the chain corresponds to 22-86 (ADTGSIGGIT…SPLMDRIGKR (65 aa)). The chain crosses the membrane as a helical span at residues 87–107 (VSIMFWTIVYLIGIILQVTAV). Residues 108–112 (PSWVQ) are Cytoplasmic-facing. The chain crosses the membrane as a helical span at residues 113–133 (IMVAKIWTGLAIGALSVLAPG). Over 134–144 (FQSEVAPATLR) the chain is Mitochondrial intermembrane. The chain crosses the membrane as a helical span at residues 145-165 (GTIVTTYQLAVTGGIFIAACI). Topologically, residues 166–179 (NMGTHKLHKTAQWR) are cytoplasmic. A helical transmembrane segment spans residues 180–200 (VSMGINLLWGIIMFIGISFLP). Residues 201–304 (ESPRYLIAIG…TGMNSPYLSA (104 aa)) are Mitochondrial intermembrane-facing. A helical transmembrane segment spans residues 305–325 (LILDAVNFGCTFGGLFVLEFF). The Cytoplasmic portion of the chain corresponds to 326–328 (GRR). A helical transmembrane segment spans residues 329-349 (MPLIIGGVWQSITFFIYAAVG). Topologically, residues 350–363 (NRALTRKNGTSNHR) are mitochondrial intermembrane. Residues 364–384 (AGAVMIVFSCLFIFSFAQTWG) traverse the membrane as a helical segment. Over 385–404 (PAAYVIVGESYPIRYRSKCA) the chain is Cytoplasmic. A helical membrane pass occupies residues 405–425 (AVATTGNWLWGFLITFFTPFI). The Mitochondrial intermembrane portion of the chain corresponds to 426–432 (SDSIGFK). Residues 433 to 453 (YGYIFAACNLCAACIIFLFAH) form a helical membrane-spanning segment. Over 454-547 (ETKGLTLEEI…NYVDEQDRYA (94 aa)) the chain is Cytoplasmic. Residues 482 to 547 (GQAAKQQQEV…NYVDEQDRYA (66 aa)) are disordered. Residues 517 to 529 (TSSNDITSSTSSS) show a composition bias toward low complexity. Position 519 is a phosphoserine (Ser519). 2 positions are modified to phosphothreonine: Thr523 and Thr526. A phosphoserine mark is found at Ser527, Ser528, Ser529, and Ser537.

It belongs to the major facilitator superfamily. Sugar transporter (TC 2.A.1.1) family.

It localises to the mitochondrion membrane. This Schizosaccharomyces pombe (strain 972 / ATCC 24843) (Fission yeast) protein is Probable high-affinity hexose transporter ght8, mitochondrial (ght8).